The chain runs to 953 residues: ABC transporter A family member 11 (953 aa).

A run of 6 helical transmembrane segments spans residues 33–53 (CLQI…EEAM), 230–250 (GPVF…GALV), 277–297 (TWEG…GMIF), 307–327 (FVLV…LAFA), 341–361 (VGFL…TGFP), and 417–437 (VISI…WFVL). In terms of domain architecture, ABC transporter spans 519–764 (VQIHGLAKTY…FGTGFVATVS (246 aa)). 565-572 (GPNGAGKT) contacts ATP.

It belongs to the ABC transporter superfamily. ABCA family. CPR flippase (TC 3.A.1.211) subfamily.

The protein localises to the membrane. The protein is ABC transporter A family member 11 (ABCA11) of Arabidopsis thaliana (Mouse-ear cress).